A 920-amino-acid polypeptide reads, in one-letter code: Bifunctional aspartokinase/homoserine dehydrogenase 1, chloroplastic (920 aa).

The disordered stretch occupies residues 1 to 21 (MRSLTVASRHPGAAFSTRRRP). A chloroplast-targeting transit peptide spans 1–92 (MRSLTVASRH…EAIADLPKGD (92 aa)). The segment at 93 to 341 (MWSVHKFGGT…VSEAVILSTL (249 aa)) is aspartokinase. Positions 342-566 (SYQEAWEMSY…LSKTTLAVGI (225 aa)) are interface. 2 consecutive ACT domains span residues 416-491 (VEGT…VIHN) and 497-574 (TVGL…LIGR). Residues 567 to 920 (IGPGLIGRTL…RLSSYLGAPS (354 aa)) form a homoserine dehydrogenase region. Positions 572 and 601 each coordinate NAD(+). Ile572 provides a ligand contact to NADP(+). An NADPH-binding site is contributed by Ile572. NADP(+) is bound by residues Arg604, Thr653, and Lys677. Residue Thr653 participates in NAD(+) binding. Positions 653 and 677 each coordinate NADPH. Residues Glu704, Val707, Ala709, and Leu711 each coordinate Na(+). Residues Gly762 and Glu765 each coordinate NADP(+). Residues Glu765 and Asp776 each contribute to the L-homoserine site. Lys780 acts as the Proton donor in catalysis. Gly897 contacts NAD(+). Gly897 provides a ligand contact to NADP(+). Gly897 serves as a coordination point for NADPH.

This sequence in the N-terminal section; belongs to the aspartokinase family. The protein in the C-terminal section; belongs to the homoserine dehydrogenase family. Homo- or heterodimer. Requires a metal cation as cofactor.

It localises to the plastid. It is found in the chloroplast. The catalysed reaction is L-homoserine + NADP(+) = L-aspartate 4-semialdehyde + NADPH + H(+). The enzyme catalyses L-homoserine + NAD(+) = L-aspartate 4-semialdehyde + NADH + H(+). It catalyses the reaction L-aspartate + ATP = 4-phospho-L-aspartate + ADP. The protein operates within amino-acid biosynthesis; L-lysine biosynthesis via DAP pathway; (S)-tetrahydrodipicolinate from L-aspartate: step 1/4. It functions in the pathway amino-acid biosynthesis; L-methionine biosynthesis via de novo pathway; L-homoserine from L-aspartate: step 1/3. It participates in amino-acid biosynthesis; L-methionine biosynthesis via de novo pathway; L-homoserine from L-aspartate: step 3/3. Its pathway is amino-acid biosynthesis; L-threonine biosynthesis; L-threonine from L-aspartate: step 1/5. The protein operates within amino-acid biosynthesis; L-threonine biosynthesis; L-threonine from L-aspartate: step 3/5. In terms of biological role, bifunctional aspartate kinase and homoserine dehydrogenase that catalyzes the first and the third steps toward the synthesis of lysine, methionine and threonine from aspartate. This Zea mays (Maize) protein is Bifunctional aspartokinase/homoserine dehydrogenase 1, chloroplastic (AKHSDH1).